A 468-amino-acid chain; its full sequence is ATP synthase subunit beta 1 (468 aa).

Residue 151–158 coordinates ATP; the sequence is GGAGVGKT.

The protein belongs to the ATPase alpha/beta chains family. In terms of assembly, F-type ATPases have 2 components, CF(1) - the catalytic core - and CF(0) - the membrane proton channel. CF(1) has five subunits: alpha(3), beta(3), gamma(1), delta(1), epsilon(1). CF(0) has three main subunits: a(1), b(2) and c(9-12). The alpha and beta chains form an alternating ring which encloses part of the gamma chain. CF(1) is attached to CF(0) by a central stalk formed by the gamma and epsilon chains, while a peripheral stalk is formed by the delta and b chains.

Its subcellular location is the cell inner membrane. It catalyses the reaction ATP + H2O + 4 H(+)(in) = ADP + phosphate + 5 H(+)(out). Its function is as follows. Produces ATP from ADP in the presence of a proton gradient across the membrane. The catalytic sites are hosted primarily by the beta subunits. This is ATP synthase subunit beta 1 from Photobacterium profundum (strain SS9).